The chain runs to 188 residues: Translation machinery-associated protein 22 (188 aa).

The SUI1 domain maps to 96-167; sequence VTIKRIERNK…EIEEFLLEKY (72 aa).

This sequence belongs to the DENR family. In terms of assembly, interacts with the 40S ribosomal subunit.

It localises to the cytoplasm. The polypeptide is Translation machinery-associated protein 22 (TMA22) (Chaetomium globosum (strain ATCC 6205 / CBS 148.51 / DSM 1962 / NBRC 6347 / NRRL 1970) (Soil fungus)).